The following is a 183-amino-acid chain: Gamma-crystallin N (183 aa).

4 consecutive Beta/gamma crystallin 'Greek key' domains span residues 6–46 (GKII…RVET), 47–89 (GAWI…KPVR), 95–136 (YRLE…KVYG), and 138–180 (GAWV…RRVV).

The protein belongs to the beta/gamma-crystallin family. Monomer.

In terms of biological role, crystallins are the dominant structural components of the vertebrate eye lens. The sequence is that of Gamma-crystallin N (crygn) from Xenopus tropicalis (Western clawed frog).